We begin with the raw amino-acid sequence, 148 residues long: Leghemoglobin 29 (148 aa).

Residues 2–148 form the Globin domain; the sequence is EFTLRQEALV…LAVAIMKEMS (147 aa). Y30 carries the post-translational modification Nitrated tyrosine. S45 serves as a coordination point for heme b. A Phosphoserine modification is found at S45. H63 contacts O2. H95 and K98 together coordinate heme b. Nitrated tyrosine is present on Y136.

This sequence belongs to the plant globin family. Monomer. Nitrated in effective nodules and particularly in hypoxic conditions; this mechanism may play a protective role in the symbiosis by buffering toxic peroxynitrite NO(2)(-). Nitration level decrease during nodule senescence. Post-translationally, phosphorylation at Ser-45 disrupts the molecular environment of its porphyrin ring oxygen binding pocket, thus leading to a reduced oxygen consumption and to the delivery of oxygen O(2) to symbiosomes. As to expression, accumulates in root nodules after inoculation by bacteria of the genus Rhizobium. Expressed in mycorrhizal roots in the presence of the mycorrhizal fungus Glomus fasciculatum.

The protein resides in the cytoplasm. Its subcellular location is the cytosol. It is found in the nucleus. In terms of biological role, leghemoglobin that reversibly binds oxygen O(2) through a pentacoordinated heme iron. In root nodules, facilitates the diffusion of oxygen to the bacteroids while preventing the bacterial nitrogenase from being inactivated by buffering dioxygen, nitric oxide and carbon monoxide, and promoting the formation of reactive oxygen species (ROS, e.g. H(2)O(2)). This role is essential for symbiotic nitrogen fixation (SNF). This chain is Leghemoglobin 29, found in Vicia faba (Broad bean).